Here is a 400-residue protein sequence, read N- to C-terminus: Elongation factor Tu (400 aa).

A tr-type G domain is found at 10–208; it reads KPHVNVGTIG…AMDNYIPEPQ (199 aa). Positions 19 to 26 are G1; the sequence is GHIDHGKS. A GTP-binding site is contributed by 19 to 26; it reads GHIDHGKS. Ser-26 contacts Mg(2+). Residues 60 to 64 are G2; sequence GITIN. A G3 region spans residues 81-84; the sequence is DCPG. GTP-binding positions include 81–85 and 136–139; these read DCPGH and NKTD. Residues 136–139 are G4; sequence NKTD. The segment at 174–176 is G5; it reads SAL.

The protein belongs to the TRAFAC class translation factor GTPase superfamily. Classic translation factor GTPase family. EF-Tu/EF-1A subfamily. In terms of assembly, monomer.

The protein resides in the cytoplasm. It carries out the reaction GTP + H2O = GDP + phosphate + H(+). Functionally, GTP hydrolase that promotes the GTP-dependent binding of aminoacyl-tRNA to the A-site of ribosomes during protein biosynthesis. This is Elongation factor Tu from Thermotoga petrophila (strain ATCC BAA-488 / DSM 13995 / JCM 10881 / RKU-1).